The chain runs to 669 residues: Acyl-coenzyme A oxidase 1 (669 aa).

FAD is bound by residues T152 and G191. E434 functions as the Proton acceptor in the catalytic mechanism. A Phosphotyrosine modification is found at Y544. S551 bears the Phosphoserine mark. Positions 667–669 (AHL) match the Microbody targeting signal motif.

It belongs to the acyl-CoA oxidase family. As to quaternary structure, homodimer. Requires FAD as cofactor. Expressed in glia.

The protein localises to the peroxisome. It is found in the nucleus. The enzyme catalyses a 2,3-saturated acyl-CoA + O2 = a (2E)-enoyl-CoA + H2O2. It participates in lipid metabolism; peroxisomal fatty acid beta-oxidation. Functionally, catalyzes the desaturation of acyl-CoAs to 2-trans-enoyl-CoAs. First enzyme of the fatty acid beta-oxidation pathway. The polypeptide is Acyl-coenzyme A oxidase 1 (Drosophila melanogaster (Fruit fly)).